Here is a 375-residue protein sequence, read N- to C-terminus: Glutamate 5-kinase (375 aa).

Lys3 lines the ATP pocket. Ser44, Asp131, and Asn143 together coordinate substrate. Residues 163 to 164 and 205 to 211 each bind ATP; these read SD and TGGMVTK. The 78-residue stretch at 269–346 folds into the PUA domain; sequence EGTLWVDDGA…GDIEALLGYR (78 aa).

The protein belongs to the glutamate 5-kinase family.

The protein resides in the cytoplasm. The catalysed reaction is L-glutamate + ATP = L-glutamyl 5-phosphate + ADP. Its pathway is amino-acid biosynthesis; L-proline biosynthesis; L-glutamate 5-semialdehyde from L-glutamate: step 1/2. In terms of biological role, catalyzes the transfer of a phosphate group to glutamate to form L-glutamate 5-phosphate. The chain is Glutamate 5-kinase from Rhodospirillum rubrum (strain ATCC 11170 / ATH 1.1.1 / DSM 467 / LMG 4362 / NCIMB 8255 / S1).